Here is a 25-residue protein sequence, read N- to C-terminus: Xenoposin precursor fragment R2 (25 aa).

As to expression, expressed by the skin glands.

It is found in the secreted. Its function is as follows. Antimicrobial peptide. This is Xenoposin precursor fragment R2 from Xenopus ruwenzoriensis (Uganda clawed frog).